Consider the following 451-residue polypeptide: uncharacterized protein (451 aa).

Helical transmembrane passes span 11 to 31 (VLLKLIQILFFTISISIYIDL), 56 to 76 (IQIYYWFVGIILFSIAWSIGT), 151 to 171 (IIGIQSCLIIFFSTLGFNIYL), 175 to 195 (FWLIKTIIVDWIISAILLIIF), and 207 to 227 (VYSVISYIFGSNVLGFGTIKI). Residues 250–300 (TKSNNNNNNNNNNKQDDNIIYDTDSSFNGQSSSSSSSSSSSSSSSSSATTT) form a disordered region. 2 stretches are compositionally biased toward low complexity: residues 253 to 262 (NNNNNNNNNN) and 280 to 300 (SSSSSSSSSSSSSSSSSATTT). Helical transmembrane passes span 392-412 (FVGVIILWVYTISNFIISDYS) and 413-433 (LLTIPNILVVVGFSGTILTYL).

The protein resides in the membrane. This is an uncharacterized protein from Dictyostelium discoideum (Social amoeba).